A 251-amino-acid polypeptide reads, in one-letter code: Triosephosphate isomerase (251 aa).

9-11 (NWK) is a binding site for substrate. The Electrophile role is filled by histidine 95. Glutamate 167 serves as the catalytic Proton acceptor. Substrate contacts are provided by residues glycine 173, serine 213, and 234–235 (GG).

The protein belongs to the triosephosphate isomerase family. As to quaternary structure, homodimer.

Its subcellular location is the cytoplasm. It carries out the reaction D-glyceraldehyde 3-phosphate = dihydroxyacetone phosphate. The protein operates within carbohydrate biosynthesis; gluconeogenesis. Its pathway is carbohydrate degradation; glycolysis; D-glyceraldehyde 3-phosphate from glycerone phosphate: step 1/1. In terms of biological role, involved in the gluconeogenesis. Catalyzes stereospecifically the conversion of dihydroxyacetone phosphate (DHAP) to D-glyceraldehyde-3-phosphate (G3P). In Enterococcus faecalis (strain ATCC 700802 / V583), this protein is Triosephosphate isomerase.